The sequence spans 93 residues: Alpha-defensin 15 (93 aa).

An N-terminal signal peptide occupies residues 1 to 19 (MKTLVLLSALVLLAFQVQA). Residues 20 to 58 (DPIQNTDEETKTEEQPGEDDQAVSVSFGDPEGSSLQEES) constitute a propeptide that is removed on maturation. Residues 23–56 (QNTDEETKTEEQPGEDDQAVSVSFGDPEGSSLQE) form a disordered region. 3 disulfides stabilise this stretch: Cys-64–Cys-92, Cys-66–Cys-81, and Cys-71–Cys-91.

Belongs to the alpha-defensin family. Paneth cells of the small bowel.

The protein resides in the secreted. Functionally, probably contributes to the antimicrobial barrier function of the small bowel mucosa. The sequence is that of Alpha-defensin 15 (Defa15) from Mus musculus (Mouse).